Reading from the N-terminus, the 931-residue chain is MTLAPADLPASLQPLVDRALARLAQVLPEPIPANLLPLLTRLAVTSDFALDTLVRQPALLAQLAAPGCPPIPAPVLDPLQPSDWPAQIRRWRTAMSTRLIWRDLTGLDDVAQTLAGATALAEDCLRLALDALQQEFAQRHGVIADEHGIPQQLVVFGLGKLGGGELNFSSDVDLVYAYPQGGESDGPRPLAAEEYFARLGQRLAKLLDETTVDGFSHRVDLRLRPFGSAGRVALSFAAMDQYFQREGRDWERYAWLKARAVAGDIEAGEAWLQTLRPFVYRRYLDFTALDGLREMKAAITAEVARRELHDDIKRGAGGIREIEFLCQALQLIRGGREPALRERRLLVALDALVAAGQIAPEDGSALREAYLFLRRLENRLQMLRDAQTHVLPSDALDRERIAVGLGYPDWEVLRAALAVQQQRVSTEFAALLAPRKGQAAPDALANYWRSLPEGSNAPLLAEAGFLDANGADQSLRDFAQGTGVKSLSDAARARLDRVLPALLHAATRSPQPDAALKRVLGLLQAVLRRTSYLALLDEQPSALARLVDVLARSALLAERLAAYPLLLDELLDVRVSGPMPDAAGMLAECQQVLAVEDPESALRWLNETRLALSFRMAMATLDGRQGAVDSTRQLAELAQAVVVTVLAMAEADMHAAHGEIPGGRFAIIGYGSLGGLELGFGSDLDLVFLHDNPAGVDASDGARPLEPGRWYARLAQKVMALLGAVTAAGRLYDIDVRLRPDGGKGSLVSSLASYTEYQRERAWTWEHQALVRARGVAGDASLLADFEQVRAQTLGRERDTGVLYADVLKMRGRMRTELDRSDAARLDLKQGAGGVVDLEFLLQTGVLARSARHAALLQPRDTPSLIDALAVAEFLPEDTAQALHGAHATLLDVGLACTLDRRPRLAPTTPAIEEACAAITAACIAAELPFA.

The tract at residues 1–434 (MTLAPADLPA…STEFAALLAP (434 aa)) is adenylyl removase. The tract at residues 441 to 931 (PDALANYWRS…ACIAAELPFA (491 aa)) is adenylyl transferase.

It belongs to the GlnE family. Mg(2+) serves as cofactor.

It catalyses the reaction [glutamine synthetase]-O(4)-(5'-adenylyl)-L-tyrosine + phosphate = [glutamine synthetase]-L-tyrosine + ADP. It carries out the reaction [glutamine synthetase]-L-tyrosine + ATP = [glutamine synthetase]-O(4)-(5'-adenylyl)-L-tyrosine + diphosphate. In terms of biological role, involved in the regulation of glutamine synthetase GlnA, a key enzyme in the process to assimilate ammonia. When cellular nitrogen levels are high, the C-terminal adenylyl transferase (AT) inactivates GlnA by covalent transfer of an adenylyl group from ATP to specific tyrosine residue of GlnA, thus reducing its activity. Conversely, when nitrogen levels are low, the N-terminal adenylyl removase (AR) activates GlnA by removing the adenylyl group by phosphorolysis, increasing its activity. The regulatory region of GlnE binds the signal transduction protein PII (GlnB) which indicates the nitrogen status of the cell. The chain is Bifunctional glutamine synthetase adenylyltransferase/adenylyl-removing enzyme from Stenotrophomonas maltophilia (strain R551-3).